The chain runs to 683 residues: Methionine--tRNA ligase (683 aa).

Residues 15–25 carry the 'HIGH' region motif; that stretch reads YYPSGKLHIGN. The short motif at 311–315 is the 'KMSKS' region element; that stretch reads KMSKS. Lysine 314 serves as a coordination point for ATP. Residues 581 to 683 enclose the tRNA-binding domain; sequence DFDKVELKVA…DNMVNGSLIS (103 aa).

This sequence belongs to the class-I aminoacyl-tRNA synthetase family. MetG type 2B subfamily. Homodimer.

It localises to the cytoplasm. The catalysed reaction is tRNA(Met) + L-methionine + ATP = L-methionyl-tRNA(Met) + AMP + diphosphate. Functionally, is required not only for elongation of protein synthesis but also for the initiation of all mRNA translation through initiator tRNA(fMet) aminoacylation. This chain is Methionine--tRNA ligase, found in Lactiplantibacillus plantarum (strain ATCC BAA-793 / NCIMB 8826 / WCFS1) (Lactobacillus plantarum).